The following is an 81-amino-acid chain: Photosystem I iron-sulfur center (81 aa).

4Fe-4S ferredoxin-type domains are found at residues 2–31 (SHSVKVYDTCIGCTQCVRACPCDVLEMVAW) and 39–68 (IASAPRTEDCIGCKRCETACPTDFLSVRVY). [4Fe-4S] cluster-binding residues include C11, C14, C17, C21, C48, C51, C54, and C58.

The eukaryotic PSI reaction center is composed of at least 11 subunits. [4Fe-4S] cluster is required as a cofactor.

Its subcellular location is the plastid. The protein resides in the chloroplast thylakoid membrane. It carries out the reaction reduced [plastocyanin] + hnu + oxidized [2Fe-2S]-[ferredoxin] = oxidized [plastocyanin] + reduced [2Fe-2S]-[ferredoxin]. In terms of biological role, apoprotein for the two 4Fe-4S centers FA and FB of photosystem I (PSI); essential for photochemical activity. FB is the terminal electron acceptor of PSI, donating electrons to ferredoxin. The C-terminus interacts with PsaA/B/D and helps assemble the protein into the PSI complex. Required for binding of PsaD and PsaE to PSI. PSI is a plastocyanin/cytochrome c6-ferredoxin oxidoreductase, converting photonic excitation into a charge separation, which transfers an electron from the donor P700 chlorophyll pair to the spectroscopically characterized acceptors A0, A1, FX, FA and FB in turn. The chain is Photosystem I iron-sulfur center from Guillardia theta (Cryptophyte).